Here is a 250-residue protein sequence, read N- to C-terminus: Cell division protein ZapD (250 aa).

Belongs to the ZapD family. As to quaternary structure, interacts with FtsZ.

The protein localises to the cytoplasm. Functionally, cell division factor that enhances FtsZ-ring assembly. Directly interacts with FtsZ and promotes bundling of FtsZ protofilaments, with a reduction in FtsZ GTPase activity. This is Cell division protein ZapD from Yersinia pseudotuberculosis serotype O:1b (strain IP 31758).